A 68-amino-acid polypeptide reads, in one-letter code: Conotoxin G1.9 (68 aa).

Positions 1–21 are cleaved as a signal peptide; that stretch reads MGMRMMFTVFLLVVLATTVVS. Residues 22-44 constitute a propeptide that is removed on maturation; that stretch reads FTSRRGPKSRRGEPVPTTVINYG. Intrachain disulfides connect C46–C52 and C47–C61.

It belongs to the conotoxin A superfamily. Expressed by the venom duct.

Its subcellular location is the secreted. Functionally, does not show activity on all the human nAChR subtypes studied. The sequence is that of Conotoxin G1.9 from Conus geographus (Geography cone).